A 385-amino-acid chain; its full sequence is Hsp70/Hsp90 co-chaperone CNS1 (385 aa).

A disordered region spans residues 1-37 (MSSVNANGGYTKPQKYVPGPGDPELPPQLSEFKDKTS). TPR repeat units lie at residues 83 to 116 (AENFKKQGNELYKAKRFKDARELYSKGLAVECED), 121 to 154 (ESLYANRAACELELKNYRRCIEDCSKALTINPKN), and 155 to 189 (VKCYYRTSKAFFQLNKLEEAKSAATFANQRIDPEN).

This sequence belongs to the TTC4 family. Monomer. Component of Hsp70 and Hsp90 chaperone complexes. Interacts (via TPR repeats) with HSC82 and HSP82 (via C-terminal MEEVD pentapeptide). Interacts with CPR7, SSA1 and SPI1.

It localises to the cytoplasm. Its function is as follows. Co-chaperone that binds to the molecular chaperones Hsp90 (HSC82 and HSP82) and Hsp70 (SSA1). Stimulates SSA1 ATPase activity, but not Hsp90 ATPase activity. Involved in only a subset of Hsp90 functions. The polypeptide is Hsp70/Hsp90 co-chaperone CNS1 (CNS1) (Saccharomyces cerevisiae (strain ATCC 204508 / S288c) (Baker's yeast)).